Reading from the N-terminus, the 375-residue chain is Response regulator aspartate phosphatase E (375 aa).

The stretch at 24-95 forms a coiled coil; it reads NVTDAEMLKA…HKKKLDNMRA (72 aa). TPR repeat units lie at residues 96-129, 177-210, 219-252, 258-291, 297-330, and 333-366; these read YYYNFFRGMYEFRNGEYTRAITYYKKAERKIPTI, IQCHFVIAGNYDDLENHEKALPHLQEALKGAELL, ATAFFNLGNCYHKMDNLNKAARYIEQALVQYRKI, PQAYHDLALIYFKQGKKEQAMDCFRKGIRSAVDF, MNLFEALDVLYIRNGDTPKLLNIFSRLENGKGYP, and EELALLGGNLFDYNGKIEDSIICFKKMVYAQKQI.

This sequence belongs to the Rap family.

Its subcellular location is the cytoplasm. Its activity is regulated as follows. Phosphatase activity is inhibited by the phosphatase regulator PhrE. Functionally, involved in the regulation of sporulation. Acts as a phosphatase that specifically dephosphorylates the sporulation initiation phosphotransferase Spo0F and inhibits its activity. Probably plays a dispensable role in the overall context of sporulation initiation. In Bacillus subtilis (strain 168), this protein is Response regulator aspartate phosphatase E (rapE).